A 592-amino-acid polypeptide reads, in one-letter code: Arginine--tRNA ligase (592 aa).

The 'HIGH' region motif lies at Ala134–His144.

It belongs to the class-I aminoacyl-tRNA synthetase family. In terms of assembly, monomer.

It is found in the cytoplasm. It catalyses the reaction tRNA(Arg) + L-arginine + ATP = L-arginyl-tRNA(Arg) + AMP + diphosphate. This is Arginine--tRNA ligase from Coxiella burnetii (strain CbuG_Q212) (Coxiella burnetii (strain Q212)).